Here is a 231-residue protein sequence, read N- to C-terminus: Sensory transduction protein BceR (231 aa).

Positions 3–116 constitute a Response regulatory domain; that stretch reads KIMLIEDDHT…VLVAKIQAIL (114 aa). D52 carries the 4-aspartylphosphate modification. Positions 127-225 form a DNA-binding region, ompR/PhoB-type; the sequence is TQLKTWCGAT…KVGQGYMAKE (99 aa).

Phosphorylated by BceS.

The protein localises to the cytoplasm. In terms of biological role, member of the two-component regulatory system BceS/BceR involved in the regulation of bacitracin resistance. When activated by BceS, binds to the upstream region of the bceAB promoter and up-regulates the expression of these two genes. The sequence is that of Sensory transduction protein BceR (bceR) from Halalkalibacterium halodurans (strain ATCC BAA-125 / DSM 18197 / FERM 7344 / JCM 9153 / C-125) (Bacillus halodurans).